The chain runs to 400 residues: Tryptophan 2,3-dioxygenase (400 aa).

Residues 75 to 79 and arginine 146 contribute to the substrate site; that span reads FIIIH. Residue histidine 332 coordinates heme. Threonine 346 is a substrate binding site.

The protein belongs to the tryptophan 2,3-dioxygenase family. As to quaternary structure, homotetramer. Dimer of dimers. Requires heme as cofactor.

It catalyses the reaction L-tryptophan + O2 = N-formyl-L-kynurenine. It participates in amino-acid degradation; L-tryptophan degradation via kynurenine pathway; L-kynurenine from L-tryptophan: step 1/2. In terms of biological role, heme-dependent dioxygenase that catalyzes the oxidative cleavage of the L-tryptophan (L-Trp) pyrrole ring and converts L-tryptophan to N-formyl-L-kynurenine. Catalyzes the oxidative cleavage of the indole moiety. The protein is Tryptophan 2,3-dioxygenase of Dictyostelium discoideum (Social amoeba).